A 273-amino-acid chain; its full sequence is Ribosomal RNA small subunit methyltransferase A (273 aa).

S-adenosyl-L-methionine contacts are provided by Asn-18, Leu-20, Gly-45, Glu-66, Asp-91, and Asn-113.

It belongs to the class I-like SAM-binding methyltransferase superfamily. rRNA adenine N(6)-methyltransferase family. RsmA subfamily.

It localises to the cytoplasm. It catalyses the reaction adenosine(1518)/adenosine(1519) in 16S rRNA + 4 S-adenosyl-L-methionine = N(6)-dimethyladenosine(1518)/N(6)-dimethyladenosine(1519) in 16S rRNA + 4 S-adenosyl-L-homocysteine + 4 H(+). Functionally, specifically dimethylates two adjacent adenosines (A1518 and A1519) in the loop of a conserved hairpin near the 3'-end of 16S rRNA in the 30S particle. May play a critical role in biogenesis of 30S subunits. The sequence is that of Ribosomal RNA small subunit methyltransferase A from Salmonella choleraesuis (strain SC-B67).